The primary structure comprises 550 residues: Chaperonin GroEL (550 aa).

Residues 30-33 (TLGP), lysine 51, 87-91 (DGTTT), glycine 415, and aspartate 496 contribute to the ATP site.

The protein belongs to the chaperonin (HSP60) family. Forms a cylinder of 14 subunits composed of two heptameric rings stacked back-to-back. Interacts with the co-chaperonin GroES.

It localises to the cytoplasm. The catalysed reaction is ATP + H2O + a folded polypeptide = ADP + phosphate + an unfolded polypeptide.. Functionally, together with its co-chaperonin GroES, plays an essential role in assisting protein folding. The GroEL-GroES system forms a nano-cage that allows encapsulation of the non-native substrate proteins and provides a physical environment optimized to promote and accelerate protein folding. This Rickettsia typhi (strain ATCC VR-144 / Wilmington) protein is Chaperonin GroEL.